A 638-amino-acid chain; its full sequence is Methyl-accepting chemotaxis protein McpQ (638 aa).

A helical transmembrane segment spans residues 18–38; it reads LGLGFGLVLLLTLAITLTGWH. One can recognise an HBM domain in the interval 45 to 282; the sequence is DRGDKLGNIS…SQTEVRDAAA (238 aa). A helical membrane pass occupies residues 287–307; sequence TLLTVATVLALALGLLAAWAI. The HAMP domain occupies 309–361; that stretch reads RQIIIPLRQTLRAAERVASGDLTQSLQVQRRDELGQLQASMHRMTQGLRELIG. A Methyl-accepting transducer domain is found at 366 to 602; it reads GVTQIASAAE…EINRSVMNVR (237 aa).

It belongs to the methyl-accepting chemotaxis (MCP) protein family.

It localises to the cell membrane. Chemotactic-signal transducers respond to changes in the concentration of attractants and repellents in the environment, transduce a signal from the outside to the inside of the cell, and facilitate sensory adaptation through the variation of the level of methylation. McpQ recognizes specifically citrate and citrate/metal(2+) complexes. Binds citrate/metal(2+) complexes with higher affinity than free citrate, and mediates preferentially chemotaxis toward citrate/metal(2+) complexes. The polypeptide is Methyl-accepting chemotaxis protein McpQ (Pseudomonas putida (strain ATCC 47054 / DSM 6125 / CFBP 8728 / NCIMB 11950 / KT2440)).